The chain runs to 206 residues: LexA repressor (206 aa).

Positions Arg28 to Lys48 form a DNA-binding region, H-T-H motif. Catalysis depends on for autocatalytic cleavage activity residues Ser123 and Lys160.

It belongs to the peptidase S24 family. Homodimer.

The catalysed reaction is Hydrolysis of Ala-|-Gly bond in repressor LexA.. Functionally, represses a number of genes involved in the response to DNA damage (SOS response), including recA and lexA. In the presence of single-stranded DNA, RecA interacts with LexA causing an autocatalytic cleavage which disrupts the DNA-binding part of LexA, leading to derepression of the SOS regulon and eventually DNA repair. In Shewanella halifaxensis (strain HAW-EB4), this protein is LexA repressor.